The primary structure comprises 363 residues: rRNA processing protein rcl1 (363 aa).

The protein belongs to the RNA 3'-terminal cyclase family. Type 2 subfamily. In terms of assembly, interacts directly with bms1 and the U3 snoRNA to form a stable subcomplex. Component of the 90S small subunit processome also known as 90S pre-ribosome that consists of the 35S pre-rRNA, early-associating ribosomal proteins most of which are part of the small ribosomal subunit, the U3 snoRNA and associated proteins.

The protein resides in the nucleus. Its subcellular location is the nucleolus. In terms of biological role, does not have cyclase activity. Plays a role in 40S-ribosomal-subunit biogenesis in the early pre-rRNA processing steps at sites A0, A1 and A2 that are required for proper maturation of the 18S RNA. Rcl1 activates bms1 by promoting GDP/GTP exchange. The polypeptide is rRNA processing protein rcl1 (rcl1) (Schizosaccharomyces pombe (strain 972 / ATCC 24843) (Fission yeast)).